Reading from the N-terminus, the 467-residue chain is Nodulation protein T (467 aa).

Residues 1 to 17 (MRFTRYTTPFFSLLLSG) form the signal peptide. A lipid anchor (N-palmitoyl cysteine) is attached at Cys-18. The S-diacylglycerol cysteine moiety is linked to residue Cys-18.

Belongs to the outer membrane factor (OMF) (TC 1.B.17) family.

The protein localises to the cell membrane. The protein is Nodulation protein T (nodT) of Rhizobium leguminosarum bv. trifolii.